Reading from the N-terminus, the 364-residue chain is Aromatic prenyltransferase (364 aa).

The N-terminal stretch at 1–22 is a signal peptide; that stretch reads MDRNQWTLALMALMRFAHRAFI. 2 N-linked (GlcNAc...) asparagine glycosylation sites follow: N142 and N337.

The protein belongs to the aromatic prenyltransferase family.

Functionally, prenyltransferase that attaches isoprenoid moieties to carbon atoms of aromatic substrates in an enzyme-catalyzed Friedel-Crafts reaction. In Talaromyces marneffei (strain ATCC 18224 / CBS 334.59 / QM 7333) (Penicillium marneffei), this protein is Aromatic prenyltransferase.